We begin with the raw amino-acid sequence, 451 residues long: Bacteriochlorophyllide d C-8(2)-methyltransferase (451 aa).

In terms of domain architecture, B12-binding spans methionine 1–glutamate 118. One can recognise a Radical SAM core domain in the interval valine 148–arginine 377. Residues cysteine 162, cysteine 166, and cysteine 169 each coordinate [4Fe-4S] cluster.

Belongs to the radical SAM superfamily. [4Fe-4S] cluster is required as a cofactor.

The protein resides in the cytoplasm. The catalysed reaction is 8,12-diethyl-3-vinylbacteriochlorophyllide d + S-adenosyl-L-methionine = 12-ethyl-8-propyl-3-vinylbacteriochlorophyllide d + S-adenosyl-L-homocysteine + H(+). It carries out the reaction 12-ethyl-8-propyl-3-vinylbacteriochlorophyllide d + S-adenosyl-L-methionine = 12-ethyl-8-isobutyl-3-vinylbacteriochlorophyllide d + S-adenosyl-L-homocysteine + H(+). Its pathway is porphyrin-containing compound metabolism; bacteriochlorophyll biosynthesis (light-independent). Its function is as follows. Involved in the biosynthesis of the major light-harvesting pigment bacteriochlorophyll c (BChlc), which confers a significant competitive advantage to green sulfur bacteria living at limiting red and near-infrared light intensities. BchQ is a methyltransferase that adds two consecutive methyl groups to the ethyl carbon at the C-8(2) position of 8,12-diethyl-3-vinylbacteriochlorophyllide d to yield 12-ethyl-8-isobutyl-3-vinylbacteriochlorophyllide d. This Chlorobaculum tepidum (strain ATCC 49652 / DSM 12025 / NBRC 103806 / TLS) (Chlorobium tepidum) protein is Bacteriochlorophyllide d C-8(2)-methyltransferase.